Here is a 122-residue protein sequence, read N- to C-terminus: Large ribosomal subunit protein uL14 (122 aa).

Belongs to the universal ribosomal protein uL14 family. As to quaternary structure, part of the 50S ribosomal subunit. Forms a cluster with proteins L3 and L19. In the 70S ribosome, L14 and L19 interact and together make contacts with the 16S rRNA in bridges B5 and B8.

Functionally, binds to 23S rRNA. Forms part of two intersubunit bridges in the 70S ribosome. The protein is Large ribosomal subunit protein uL14 of Syntrophotalea carbinolica (strain DSM 2380 / NBRC 103641 / GraBd1) (Pelobacter carbinolicus).